A 379-amino-acid chain; its full sequence is Glutamate 5-kinase (379 aa).

Lysine 8 serves as a coordination point for ATP. Serine 49, aspartate 136, and asparagine 148 together coordinate substrate. ATP-binding positions include 168–169 and 211–217; these read TD and TGGMATK. The region spanning 276-354 is the PUA domain; sequence MGKIYLDAGA…ERIASLLGYM (79 aa).

It belongs to the glutamate 5-kinase family.

It localises to the cytoplasm. The catalysed reaction is L-glutamate + ATP = L-glutamyl 5-phosphate + ADP. It functions in the pathway amino-acid biosynthesis; L-proline biosynthesis; L-glutamate 5-semialdehyde from L-glutamate: step 1/2. Functionally, catalyzes the transfer of a phosphate group to glutamate to form L-glutamate 5-phosphate. This Microcystis aeruginosa (strain NIES-843 / IAM M-2473) protein is Glutamate 5-kinase.